We begin with the raw amino-acid sequence, 217 residues long: Non-structural protein NS3 (217 aa).

This sequence belongs to the orbivirus NS3 family.

In terms of biological role, may play a role in the release of virions from infected cells. This Camelus dromedarius (Dromedary) protein is Non-structural protein NS3 (Segment-10).